Reading from the N-terminus, the 399-residue chain is MNNSIILIFVAILIIFPNEFSKPTRAFSNNNFVYTDGTHFALNGKSLYINGFNAYWLMYIAYDPSTRIKVTNTFQQASKYKMNVARTWAFSHGGSRPLQSAPGVYNEQMFQGLDFVISEAKKYGIHLIMSLVNNWDAFGGKKQYVEWAVQRGQKLTSDDDFFTNPMVKGFYKNNVKVVLTRVNTITKVAYKDDPTILSWELINEPRCPSDLSGKTFQNWVLEMAGYLKSIDSNHLLEIGLEGFYGNDMRQYNPNSYIFGTNFISNNQVQGIDFTTIHMYPNQWLPGLTQEAQDKWASQWIQVHIDDSKMLKKPLLIAEFGKSTKTPGYTVAKRDNYFEKIYGTIFNCAKSGGPCGGGLFWQVLGQGMSSFDDGYQVVLQESPSTSRVILLQSLRLSKLS.

The N-terminal stretch at 1 to 26 (MNNSIILIFVAILIIFPNEFSKPTRA) is a signal peptide. Substrate contacts are provided by Trp-88 and Asn-203. The active-site Proton donor is the Glu-204. Substrate is bound at residue Tyr-279. Glu-318 functions as the Nucleophile in the catalytic mechanism. A disulfide bridge links Cys-347 with Cys-354. Residue Trp-360 coordinates substrate.

This sequence belongs to the glycosyl hydrolase 5 (cellulase A) family. Expressed in flowers and fruit pericarp.

The protein resides in the secreted. It carries out the reaction Random hydrolysis of (1-&gt;4)-beta-D-mannosidic linkages in mannans, galactomannans and glucomannans.. Its function is as follows. Possesses endo-beta-mannanase and mannan transglycosylase activities. May be involved in cell wall degradation during fruit ripening. The protein is Mannan endo-1,4-beta-mannosidase 4 (MAN4) of Solanum lycopersicum (Tomato).